Consider the following 514-residue polypeptide: Transmembrane protein 117 (514 aa).

The Cytoplasmic segment spans residues 1 to 15 (MGKDFRYYFQHPWSR). A helical transmembrane segment spans residues 16–36 (MIVAYLVIFFNFLIFAEDPVS). Residues 37-65 (HSQTEANVIVVGNCFSFVTNKYPRGVGWR) are Extracellular-facing. A helical membrane pass occupies residues 66–86 (ILKVLLWLLAILIGLIAGKFL). Topologically, residues 87–110 (FHQRLFGQLLRLKMFREDHGSWMT) are cytoplasmic. A helical transmembrane segment spans residues 111-131 (MFFSTILFLFIFSHIYNTILL). Residues 132–154 (MDGNMGAYLITDYMGIRNESFMK) lie on the Extracellular side of the membrane. Residues 155-175 (LAAVGTWMGDFVTAWMVTDMM) form a helical membrane-spanning segment. The Cytoplasmic portion of the chain corresponds to 176–198 (LQDKPYPDWGKSARAFWKKGNVR). The chain crosses the membrane as a helical span at residues 199–219 (IILFWTVLFTLTSVVVLVITT). The Extracellular portion of the chain corresponds to 220–239 (DWISWDKLNRGFLPSDEVSR). Residues 240-260 (AFLASFILVFDLLIVMQDWEF) traverse the membrane as a helical segment. The Cytoplasmic segment spans residues 261-295 (PHFMGDVDVNLPGLHTPHMQFKIPFFQKIFKEEYR). Residues 296-316 (IHITGKWFNYGIIFLVLILDL) traverse the membrane as a helical segment. Over 317–394 (NMWKNQIFYK…FIGASLDVKC (78 aa)) the chain is Extracellular. Asparagine 353 and asparagine 371 each carry an N-linked (GlcNAc...) asparagine glycan. Residues 395–415 (LAFVPSLIAFVWFGFFIWFFG) form a helical membrane-spanning segment. Topologically, residues 416 to 514 (RFLKNEQGME…PAASQRMRTN (99 aa)) are cytoplasmic. A disordered region spans residues 430 to 450 (TYTRMKRKSPSEHSKDMGITR). Over residues 438–448 (SPSEHSKDMGI) the composition is skewed to basic and acidic residues. The residue at position 453 (threonine 453) is a Phosphothreonine. Residues 494 to 514 (ESTSEVEAEQEPAASQRMRTN) are disordered.

It belongs to the TMEM117 family.

The protein localises to the cell membrane. In terms of biological role, involved in endoplasmic reticulum (ER) stress-induced cell death pathway. The sequence is that of Transmembrane protein 117 (Tmem117) from Mus musculus (Mouse).